A 281-amino-acid chain; its full sequence is Nucleotide-binding protein CTN_0898 (281 aa).

ATP is bound at residue 9–16 (GLSGAGKT). 58-61 (DVRS) is a binding site for GTP.

This sequence belongs to the RapZ-like family.

Displays ATPase and GTPase activities. The polypeptide is Nucleotide-binding protein CTN_0898 (Thermotoga neapolitana (strain ATCC 49049 / DSM 4359 / NBRC 107923 / NS-E)).